Consider the following 177-residue polypeptide: Large ribosomal subunit protein uL10 (177 aa).

It belongs to the universal ribosomal protein uL10 family. In terms of assembly, part of the ribosomal stalk of the 50S ribosomal subunit. The N-terminus interacts with L11 and the large rRNA to form the base of the stalk. The C-terminus forms an elongated spine to which L12 dimers bind in a sequential fashion forming a multimeric L10(L12)X complex.

In terms of biological role, forms part of the ribosomal stalk, playing a central role in the interaction of the ribosome with GTP-bound translation factors. The polypeptide is Large ribosomal subunit protein uL10 (Xanthomonas oryzae pv. oryzae (strain MAFF 311018)).